The following is a 405-amino-acid chain: tRNA-specific 2-thiouridylase MnmA (405 aa).

Residues 41 to 48 and L67 each bind ATP; that span reads AMSGGVDS. C135 acts as the Nucleophile in catalysis. Cysteines 135 and 231 form a disulfide. G159 is a binding site for ATP. Positions 181 to 183 are interaction with tRNA; the sequence is KDQ. The active-site Cysteine persulfide intermediate is C231.

Belongs to the MnmA/TRMU family.

The protein localises to the cytoplasm. It catalyses the reaction S-sulfanyl-L-cysteinyl-[protein] + uridine(34) in tRNA + AH2 + ATP = 2-thiouridine(34) in tRNA + L-cysteinyl-[protein] + A + AMP + diphosphate + H(+). Catalyzes the 2-thiolation of uridine at the wobble position (U34) of tRNA, leading to the formation of s(2)U34. The chain is tRNA-specific 2-thiouridylase MnmA from Maricaulis maris (strain MCS10) (Caulobacter maris).